We begin with the raw amino-acid sequence, 266 residues long: Undecaprenyl-diphosphatase (266 aa).

Transmembrane regions (helical) follow at residues 1-21 (MDTF…FLPI), 39-59 (QGLS…VMYF), 87-107 (WWII…KDFI), 111-131 (FRSI…LWWA), 144-164 (VGWK…IPGT), 183-203 (AAAR…AILV), 218-238 (ALGL…HYFL), and 246-266 (MTPF…IIFL).

The protein belongs to the UppP family.

The protein localises to the cell inner membrane. It catalyses the reaction di-trans,octa-cis-undecaprenyl diphosphate + H2O = di-trans,octa-cis-undecaprenyl phosphate + phosphate + H(+). In terms of biological role, catalyzes the dephosphorylation of undecaprenyl diphosphate (UPP). Confers resistance to bacitracin. This is Undecaprenyl-diphosphatase from Shewanella pealeana (strain ATCC 700345 / ANG-SQ1).